The sequence spans 402 residues: Exodeoxyribonuclease 7 large subunit (402 aa).

Belongs to the XseA family. As to quaternary structure, heterooligomer composed of large and small subunits.

The protein resides in the cytoplasm. The catalysed reaction is Exonucleolytic cleavage in either 5'- to 3'- or 3'- to 5'-direction to yield nucleoside 5'-phosphates.. Bidirectionally degrades single-stranded DNA into large acid-insoluble oligonucleotides, which are then degraded further into small acid-soluble oligonucleotides. This is Exodeoxyribonuclease 7 large subunit from Streptomyces coelicolor (strain ATCC BAA-471 / A3(2) / M145).